The primary structure comprises 62 residues: Large ribosomal subunit protein uL29 (62 aa).

It belongs to the universal ribosomal protein uL29 family.

This is Large ribosomal subunit protein uL29 from Helicobacter hepaticus (strain ATCC 51449 / 3B1).